Here is a 224-residue protein sequence, read N- to C-terminus: tRNA (guanine-N(7)-)-methyltransferase (224 aa).

The S-adenosyl-L-methionine site is built by Glu56, Glu81, Asp108, and Asp131. Asp131 is an active-site residue. Substrate-binding positions include Lys135, Asp167, and Thr202 to Glu205.

It belongs to the class I-like SAM-binding methyltransferase superfamily. TrmB family.

The enzyme catalyses guanosine(46) in tRNA + S-adenosyl-L-methionine = N(7)-methylguanosine(46) in tRNA + S-adenosyl-L-homocysteine. It participates in tRNA modification; N(7)-methylguanine-tRNA biosynthesis. Functionally, catalyzes the formation of N(7)-methylguanine at position 46 (m7G46) in tRNA. This Nitrosomonas eutropha (strain DSM 101675 / C91 / Nm57) protein is tRNA (guanine-N(7)-)-methyltransferase.